Here is a 144-residue protein sequence, read N- to C-terminus: Large ribosomal subunit protein uL15 (144 aa).

Residues 1 to 58 are disordered; it reads MHLNTLSPAPGSHKARKRCGRGIGSGIGKTGGRGHKGQKSRSGGSVRPGFEGGQMPLK. Residues 21–31 are compositionally biased toward gly residues; sequence RGIGSGIGKTG.

It belongs to the universal ribosomal protein uL15 family. In terms of assembly, part of the 50S ribosomal subunit.

Functionally, binds to the 23S rRNA. The sequence is that of Large ribosomal subunit protein uL15 from Colwellia psychrerythraea (strain 34H / ATCC BAA-681) (Vibrio psychroerythus).